The primary structure comprises 172 residues: Protein GrpE (172 aa).

Belongs to the GrpE family. As to quaternary structure, homodimer.

It localises to the cytoplasm. Functionally, participates actively in the response to hyperosmotic and heat shock by preventing the aggregation of stress-denatured proteins, in association with DnaK and GrpE. It is the nucleotide exchange factor for DnaK and may function as a thermosensor. Unfolded proteins bind initially to DnaJ; upon interaction with the DnaJ-bound protein, DnaK hydrolyzes its bound ATP, resulting in the formation of a stable complex. GrpE releases ADP from DnaK; ATP binding to DnaK triggers the release of the substrate protein, thus completing the reaction cycle. Several rounds of ATP-dependent interactions between DnaJ, DnaK and GrpE are required for fully efficient folding. The polypeptide is Protein GrpE (Thermotoga petrophila (strain ATCC BAA-488 / DSM 13995 / JCM 10881 / RKU-1)).